Consider the following 225-residue polypeptide: Cytidylate kinase (225 aa).

10-18 contacts ATP; that stretch reads GPASSGKST.

Belongs to the cytidylate kinase family. Type 1 subfamily.

It is found in the cytoplasm. It carries out the reaction CMP + ATP = CDP + ADP. The enzyme catalyses dCMP + ATP = dCDP + ADP. The polypeptide is Cytidylate kinase (Streptococcus suis (strain 98HAH33)).